The chain runs to 416 residues: UDP-N-acetylmuramoylalanine--D-glutamate ligase (416 aa).

Residue 108–114 (GTTGKTT) participates in ATP binding.

Belongs to the MurCDEF family.

The protein resides in the cytoplasm. It carries out the reaction UDP-N-acetyl-alpha-D-muramoyl-L-alanine + D-glutamate + ATP = UDP-N-acetyl-alpha-D-muramoyl-L-alanyl-D-glutamate + ADP + phosphate + H(+). Its pathway is cell wall biogenesis; peptidoglycan biosynthesis. In terms of biological role, cell wall formation. Catalyzes the addition of glutamate to the nucleotide precursor UDP-N-acetylmuramoyl-L-alanine (UMA). This chain is UDP-N-acetylmuramoylalanine--D-glutamate ligase, found in Chlamydia trachomatis serovar L2 (strain ATCC VR-902B / DSM 19102 / 434/Bu).